Consider the following 295-residue polypeptide: Protease HtpX (295 aa).

The next 2 membrane-spanning stretches (helical) occupy residues 4-24 (ILLFVATNLAVVLVASITLSL) and 41-61 (SSLLVFCAVFGFAGSLVSLFI). Residue His-147 participates in Zn(2+) binding. Glu-148 is an active-site residue. Residue His-151 coordinates Zn(2+). 2 helical membrane-spanning segments follow: residues 158-178 (VTLALVQGVVNTFVMFFARII) and 199-219 (VATIVAELILGILASMIVMWF). Glu-224 contacts Zn(2+).

Belongs to the peptidase M48B family. The cofactor is Zn(2+).

Its subcellular location is the cell inner membrane. The sequence is that of Protease HtpX from Pseudomonas putida (strain ATCC 700007 / DSM 6899 / JCM 31910 / BCRC 17059 / LMG 24140 / F1).